Here is a 328-residue protein sequence, read N- to C-terminus: Putative gluconeogenesis factor (328 aa).

Belongs to the gluconeogenesis factor family.

It localises to the cytoplasm. Its function is as follows. Required for morphogenesis under gluconeogenic growth conditions. This chain is Putative gluconeogenesis factor, found in Aquifex aeolicus (strain VF5).